Here is a 426-residue protein sequence, read N- to C-terminus: Probable alpha-galactosidase B (426 aa).

Positions 1-13 are cleaved as a signal peptide; the sequence is MSRSKTRQGKLPA. Intrachain disulfides connect Cys-24-Cys-56 and Cys-106-Cys-136. Asp-134 (nucleophile) is an active-site residue. 2 N-linked (GlcNAc...) asparagine glycosylation sites follow: Asn-141 and Asn-159. 204–208 contributes to the substrate binding site; that stretch reads EWGQA. A glycan (N-linked (GlcNAc...) asparagine) is linked at Asn-215. The active-site Proton donor is Asp-226. The N-linked (GlcNAc...) asparagine glycan is linked to Asn-265.

This sequence belongs to the glycosyl hydrolase 27 family.

The protein resides in the secreted. The catalysed reaction is Hydrolysis of terminal, non-reducing alpha-D-galactose residues in alpha-D-galactosides, including galactose oligosaccharides, galactomannans and galactolipids.. In terms of biological role, hydrolyzes a variety of simple alpha-D-galactoside as well as more complex molecules such as oligosaccharides and polysaccharides. The chain is Probable alpha-galactosidase B (aglB) from Aspergillus fumigatus (strain CBS 144.89 / FGSC A1163 / CEA10) (Neosartorya fumigata).